Here is a 247-residue protein sequence, read N- to C-terminus: UPF0246 protein LSL_1719 (247 aa).

Belongs to the UPF0246 family.

The sequence is that of UPF0246 protein LSL_1719 from Ligilactobacillus salivarius (strain UCC118) (Lactobacillus salivarius).